Here is a 477-residue protein sequence, read N- to C-terminus: Protein nucleotidyltransferase YdiU (477 aa).

The ATP site is built by Gly-89, Gly-91, Arg-92, Lys-112, Asp-124, Gly-125, Arg-178, and Arg-185. Catalysis depends on Asp-257, which acts as the Proton acceptor. Mg(2+) is bound by residues Asn-258 and Asp-267. Asp-267 provides a ligand contact to ATP.

Belongs to the SELO family. The cofactor is Mg(2+). Mn(2+) is required as a cofactor.

The catalysed reaction is L-seryl-[protein] + ATP = 3-O-(5'-adenylyl)-L-seryl-[protein] + diphosphate. It carries out the reaction L-threonyl-[protein] + ATP = 3-O-(5'-adenylyl)-L-threonyl-[protein] + diphosphate. The enzyme catalyses L-tyrosyl-[protein] + ATP = O-(5'-adenylyl)-L-tyrosyl-[protein] + diphosphate. It catalyses the reaction L-histidyl-[protein] + UTP = N(tele)-(5'-uridylyl)-L-histidyl-[protein] + diphosphate. The catalysed reaction is L-seryl-[protein] + UTP = O-(5'-uridylyl)-L-seryl-[protein] + diphosphate. It carries out the reaction L-tyrosyl-[protein] + UTP = O-(5'-uridylyl)-L-tyrosyl-[protein] + diphosphate. Functionally, nucleotidyltransferase involved in the post-translational modification of proteins. It can catalyze the addition of adenosine monophosphate (AMP) or uridine monophosphate (UMP) to a protein, resulting in modifications known as AMPylation and UMPylation. This chain is Protein nucleotidyltransferase YdiU, found in Synechocystis sp. (strain ATCC 27184 / PCC 6803 / Kazusa).